Here is a 257-residue protein sequence, read N- to C-terminus: Coenzyme F420:L-glutamate ligase (257 aa).

GTP contacts are provided by residues 9–12 (VPEV), 38–39 (ST), and Lys43. Asp113 provides a ligand contact to a divalent metal cation. Residue Asn116 participates in GTP binding. The a divalent metal cation site is built by Asp154, Thr155, and Glu212. Position 210 to 217 (210 to 217 (TGEGDGGT)) interacts with GTP.

Belongs to the CofE family. Homodimer. Mg(2+) is required as a cofactor. The cofactor is Mn(2+). Requires K(+) as cofactor.

The enzyme catalyses oxidized coenzyme F420-0 + GTP + L-glutamate = oxidized coenzyme F420-1 + GDP + phosphate + H(+). The catalysed reaction is oxidized coenzyme F420-1 + GTP + L-glutamate = oxidized coenzyme F420-2 + GDP + phosphate + H(+). The protein operates within cofactor biosynthesis; coenzyme F420 biosynthesis. Catalyzes the GTP-dependent successive addition of two or more gamma-linked L-glutamates to the L-lactyl phosphodiester of 7,8-didemethyl-8-hydroxy-5-deazariboflavin (F420-0) to form coenzyme F420-0-glutamyl-glutamate (F420-2) or polyglutamated F420 derivatives. The polypeptide is Coenzyme F420:L-glutamate ligase (Haloarcula marismortui (strain ATCC 43049 / DSM 3752 / JCM 8966 / VKM B-1809) (Halobacterium marismortui)).